The primary structure comprises 1228 residues: DNA repair protein rad5 (1228 aa).

Disordered regions lie at residues 1–96 (MDRH…GTLT), 194–242 (PPVR…VLPS), 280–302 (QPPT…PRVS), and 445–474 (KAMD…QELE). Positions 34–43 (PSSSPQFSAP) are enriched in low complexity. Residues 70–83 (HNDDDDDDDDDDDE) show a composition bias toward acidic residues. Residues 211 to 237 (PKKSSTSQARSRSHAQAQPQPQSNTPT) are compositionally biased toward polar residues. Positions 445–454 (KAMDKAKAGD) are enriched in basic and acidic residues. Residues 465-474 (EEAEEGQELE) are compositionally biased toward acidic residues. The Helicase ATP-binding domain maps to 574–784 (PKQEQHCLGG…FSLVRFLRVE (211 aa)). 587-594 (DEMGLGKT) is an ATP binding site. The short motif at 735-738 (DEAH) is the DEAH box element. The segment at 967-1012 (CPICAEEPMIDQAVTGCWHSACKKCLLDYIKHQTDRNEVPRCFQCR) adopts an RING-type zinc-finger fold. The Helicase C-terminal domain maps to 1060-1216 (ALISHLRTLR…MMSDEEKKMQ (157 aa)).

Belongs to the SNF2/RAD54 helicase family.

Its subcellular location is the cytoplasm. The protein localises to the nucleus. Probable helicase, member of the UBC2/RAD6 epistasis group. Functions with DNA repair protein uvs-2/rad18 in error-free postreplication DNA repair. Involved in the maintenance of wild-type rates of instability of simple repetitive sequences such as poly(GT) repeats. Seems to be involved in maintaining a balance which acts in favor of error-prone non-homologous joining during DNA double-strand breaks repairs. This Neurospora crassa (strain ATCC 24698 / 74-OR23-1A / CBS 708.71 / DSM 1257 / FGSC 987) protein is DNA repair protein rad5 (mus-41).